The sequence spans 224 residues: Peptidyl-tRNA hydrolase (224 aa).

Tyr27 is a binding site for tRNA. Residue His32 is the Proton acceptor of the active site. TRNA contacts are provided by Tyr78, Asn80, and Asn126. The segment covering 203–215 has biased composition (low complexity); sequence LSGPSSDLDGSNP. The segment at 203 to 224 is disordered; sequence LSGPSSDLDGSNPAPGHGEASS.

Belongs to the PTH family. In terms of assembly, monomer.

It localises to the cytoplasm. It carries out the reaction an N-acyl-L-alpha-aminoacyl-tRNA + H2O = an N-acyl-L-amino acid + a tRNA + H(+). In terms of biological role, hydrolyzes ribosome-free peptidyl-tRNAs (with 1 or more amino acids incorporated), which drop off the ribosome during protein synthesis, or as a result of ribosome stalling. Functionally, catalyzes the release of premature peptidyl moieties from peptidyl-tRNA molecules trapped in stalled 50S ribosomal subunits, and thus maintains levels of free tRNAs and 50S ribosomes. This chain is Peptidyl-tRNA hydrolase, found in Synechococcus sp. (strain JA-2-3B'a(2-13)) (Cyanobacteria bacterium Yellowstone B-Prime).